A 2233-amino-acid polypeptide reads, in one-letter code: Acetyl-CoA carboxylase (2233 aa).

Serine 2 is modified (N-acetylserine). Serine 2 bears the Phosphoserine mark. Residues 58 to 567 (VISKILIANN…TTGWLDDLIT (510 aa)) form the Biotin carboxylation domain. The ATP-grasp domain occupies 216–408 (KTGLVSVDDD…LPAAQLQIAM (193 aa)). 256 to 261 (GGGGKG) contacts ATP. Residues glutamate 365, glutamate 379, and asparagine 381 each coordinate Mn(2+). Residue arginine 383 is part of the active site. The Biotinyl-binding domain maps to 694–768 (LEVENDPTQL…VAGDIMAIMT (75 aa)). The residue at position 735 (lysine 735) is an N6-biotinyllysine. Phosphoserine occurs at positions 790, 1148, 1157, and 1162. Positions 1486 to 1822 (PYPVKEWLQP…KRNMPVPILE (337 aa)) constitute a CoA carboxyltransferase N-terminal domain. The interval 1486 to 2141 (PYPVKEWLQP…EEYLIKRLSH (656 aa)) is carboxyltransferase. Residue 1627–1629 (ARI) participates in acetyl-CoA binding. Arginine 1731 contributes to the CoA binding site. In terms of domain architecture, CoA carboxyltransferase C-terminal spans 1826–2141 (TWDRPVDFTP…EEYLIKRLSH (316 aa)). Glycine 1998 serves as a coordination point for acetyl-CoA. Residues lysine 2034 and arginine 2036 each contribute to the CoA site.

Homodimer. The cofactor is biotin. Requires Mn(2+) as cofactor.

The protein localises to the cytoplasm. The protein resides in the endoplasmic reticulum membrane. The enzyme catalyses hydrogencarbonate + acetyl-CoA + ATP = malonyl-CoA + ADP + phosphate + H(+). It carries out the reaction N(6)-biotinyl-L-lysyl-[protein] + hydrogencarbonate + ATP = N(6)-carboxybiotinyl-L-lysyl-[protein] + ADP + phosphate + H(+). Its pathway is lipid metabolism; malonyl-CoA biosynthesis; malonyl-CoA from acetyl-CoA: step 1/1. Its activity is regulated as follows. By phosphorylation. The catalytic activity is inhibited by soraphen A, a polyketide isolated from the myxobacterium Sorangium cellulosum and a potent inhibitor of fungal growth. Carries out three functions: biotin carboxyl carrier protein, biotin carboxylase and carboxyltransferase. Involved in the synthesis of very-long-chain fatty acid synthesis which is required to maintain a functional nuclear envelope. Required for acylation and vacuolar membrane association of VAC8 which is necessary to maintain a normal morphology of the vacuole. In Saccharomyces cerevisiae (strain ATCC 204508 / S288c) (Baker's yeast), this protein is Acetyl-CoA carboxylase (ACC1).